Reading from the N-terminus, the 2491-residue chain is Cation-independent mannose-6-phosphate receptor (2491 aa).

Positions 1 to 40 (MGAAAGRSPHLGPAPARRPQRSLLLLQLLLLVAAPGSTQA) are cleaved as a signal peptide. At 41–2304 (QAAPFPELCS…MHKGLSERSQ (2264 aa)) the chain is on the lumenal side. 12 consecutive MRH domains span residues 47–163 (ELCS…ACKK), 172–320 (VPCY…ACHR), 326–468 (KTCS…ACVK), 473–619 (LLCG…ACVL), 625–762 (ENCT…ACPE), 765–924 (LECV…ACPI), 932–1079 (QACS…ACVP), 1082–1219 (VDCQ…ACPV), 1225–1363 (DNCE…ACPP), 1367–1508 (TECS…ACPM), 1514–1648 (DDCQ…ACEQ), and 1650–1797 (TECS…VCPD). Disulfide bonds link Cys-49–Cys-69 and Cys-77–Cys-84. N-linked (GlcNAc...) asparagine glycosylation is present at Asn-112. Intrachain disulfides connect Cys-117–Cys-149, Cys-134–Cys-161, Cys-174–Cys-212, Cys-228–Cys-235, Cys-275–Cys-306, Cys-288–Cys-318, Cys-328–Cys-366, and Cys-374–Cys-382. N-linked (GlcNAc...) asparagine glycans are attached at residues Asn-400 and Asn-435. 4 disulfides stabilise this stretch: Cys-420–Cys-454, Cys-434–Cys-466, Cys-475–Cys-519, and Cys-531–Cys-538. Residues Asn-543 and Asn-581 are each glycosylated (N-linked (GlcNAc...) asparagine). 2 disulfide bridges follow: Cys-572/Cys-605 and Cys-586/Cys-617. N-linked (GlcNAc...) asparagine glycosylation occurs at Asn-626. Cystine bridges form between Cys-627–Cys-664, Cys-672–Cys-679, Cys-731–Cys-760, Cys-767–Cys-814, and Cys-823–Cys-830. The N-linked (GlcNAc...) asparagine glycan is linked to Asn-747. N-linked (GlcNAc...) asparagine glycosylation occurs at Asn-871. Cystine bridges form between Cys-875–Cys-910, Cys-893–Cys-922, Cys-934–Cys-970, Cys-976–Cys-987, Cys-1042–Cys-1077, Cys-1084–Cys-1125, and Cys-1134–Cys-1142. N-linked (GlcNAc...) asparagine glycosylation is found at Asn-951 and Asn-957. Asn-1164 carries an N-linked (GlcNAc...) asparagine glycan. Disulfide bonds link Cys-1177–Cys-1205, Cys-1190–Cys-1217, Cys-1227–Cys-1262, and Cys-1270–Cys-1282. Asn-1246 carries N-linked (GlcNAc...) asparagine glycosylation. Asn-1312 is a glycosylation site (N-linked (GlcNAc...) asparagine). Cystine bridges form between Cys-1319–Cys-1349, Cys-1333–Cys-1361, Cys-1369–Cys-1408, Cys-1420–Cys-1427, Cys-1461–Cys-1494, Cys-1476–Cys-1506, Cys-1516–Cys-1553, Cys-1559–Cys-1566, Cys-1598–Cys-1634, Cys-1614–Cys-1646, Cys-1652–Cys-1695, Cys-1706–Cys-1713, Cys-1750–Cys-1783, Cys-1766–Cys-1795, Cys-1804–Cys-1839, Cys-1850–Cys-1856, Cys-1893–Cys-1975, Cys-1903–Cys-1927, Cys-1917–Cys-1942, Cys-1957–Cys-1987, Cys-1994–Cys-2029, Cys-2039–Cys-2046, Cys-2082–Cys-2113, and Cys-2096–Cys-2125. An N-linked (GlcNAc...) asparagine glycan is attached at Asn-1656. Residue Asn-1757 is glycosylated (N-linked (GlcNAc...) asparagine). Residues 1802–1989 (DGCTLTDEQL…EWKTKVVCPP (188 aa)) enclose the Fibronectin type-II domain. N-linked (GlcNAc...) asparagine glycosylation is present at Asn-1816. MRH domains follow at residues 1992–2127 (LECK…ACAV) and 2135–2280 (VNGT…VCPL). An N-linked (GlcNAc...) asparagine glycan is attached at Asn-2085. Asn-2136 carries N-linked (GlcNAc...) asparagine glycosylation. 3 disulfides stabilise this stretch: Cys-2188–Cys-2194, Cys-2232–Cys-2266, and Cys-2248–Cys-2278. The helical transmembrane segment at 2305-2327 (AVGAVLSLLLVALTCCLLALLLY) threads the bilayer. The Cytoplasmic segment spans residues 2328-2491 (KKERRETVIS…DDSDEDLLHI (164 aa)). Lys-2352 carries the N6-acetyllysine modification. The residue at position 2409 (Ser-2409) is a Phosphoserine. The segment at 2424–2491 (GRGAGAESSH…DDSDEDLLHI (68 aa)) is disordered. Residue Arg-2425 is modified to Omega-N-methylarginine. A compositionally biased stretch (basic and acidic residues) spans 2444 to 2459 (QEREDDRVGLVRGEKA). The segment covering 2464–2477 (SSSAQQKTVSSTKL) has biased composition (polar residues). Residues Ser-2479 and Ser-2484 each carry the phosphoserine modification. A compositionally biased stretch (basic and acidic residues) spans 2479–2491 (SFHDDSDEDLLHI).

Belongs to the MRL1/IGF2R family. In terms of assembly, binds HA-I and HA-II plasma membrane adapters. Interacts with DPP4; the interaction is direct. Binds GGA1, GGA2 and GGA3. Interacts with the heterotrimeric retromer cargo-selective complex (CSC), formed by VPS26 (VPS26A or VPS26B), VPS29 and VPS35; which is involved in retrograde trafficking of the receptor from endosomes to the Golgi apparatus. Palmitoylated. Undergoes cysteine S-palmitoylation which promotes interaction with the retromer cargo-selective complex which mediates its retrograde trafficking to the Golgi apparatus.

The protein resides in the golgi apparatus membrane. It localises to the endosome membrane. Its function is as follows. Mediates the transport of phosphorylated lysosomal enzymes from the Golgi complex and the cell surface to lysosomes. Lysosomal enzymes bearing phosphomannosyl residues bind specifically to mannose-6-phosphate receptors in the Golgi apparatus and the resulting receptor-ligand complex is transported to an acidic prelysosomal compartment where the low pH mediates the dissociation of the complex. The receptor is then recycled back to the Golgi for another round of trafficking through its binding to the retromer. This receptor also binds IGF2. Acts as a positive regulator of T-cell coactivation by binding DPP4. The chain is Cation-independent mannose-6-phosphate receptor (IGF2R) from Homo sapiens (Human).